A 409-amino-acid polypeptide reads, in one-letter code: 2,3-bisphosphoglycerate-independent phosphoglycerate mutase (409 aa).

The segment at 160–179 (ITDADPKHEGNKPKTVKPLD) is disordered.

The protein belongs to the BPG-independent phosphoglycerate mutase family. A-PGAM subfamily.

It catalyses the reaction (2R)-2-phosphoglycerate = (2R)-3-phosphoglycerate. Its pathway is carbohydrate degradation; glycolysis; pyruvate from D-glyceraldehyde 3-phosphate: step 3/5. Catalyzes the interconversion of 2-phosphoglycerate and 3-phosphoglycerate. This chain is 2,3-bisphosphoglycerate-independent phosphoglycerate mutase, found in Methanosphaera stadtmanae (strain ATCC 43021 / DSM 3091 / JCM 11832 / MCB-3).